We begin with the raw amino-acid sequence, 638 residues long: MSKHVHIQLPDGQIQEYPKGITIKEAAGSISSSLQKKAAAGQVNGKLVDLSFKLEEDAELSIVTLDSQEGLQVLRHTTAHVLAQAVKRLYGEVSLGVGPVILDGFYYDMKLGKSLASGDLEAIEKEMKNIINENLEIKRIEVSYEEAEELFAQKDERLKLEILKDIPRGEDITLYQQGEFVDLCRGPHLPSTGMIKAFKLTRVSGAYWRGDSKNEVLQRVYGVAFQKKKDLDAHLHMLEEAAKRDHRKLGKQLGLFMFSEEAPGMPFYLPKGQIVRNELERFSRELQTNAGYDEVRTPFMMNQRLWEQSGHWDHYRDNMYFSEVDDTRFAMKPMNCPGHMLIFKNSLYSYRDLPIRMAEFGQVHRHEYSGALNGMLRVRTFCQDDAHIFVREDQIESEIKEAIRLIDEVYRTFGFEYSVELSTRPEDSLGDDSLWEASERALARVLEELGLSYEINEGDGAFYGPKIDFHIKDALKRSHQCATIQLDFQMPEKFDLTYINELNEKVRPVVIHRAVFGSIDRFFGILIEHYGGAFPVWLAPIQVQIIPVSHVHLDYCRKVQAELKQAGIRAGIDERNEKLGYKIRESQVQKIPYVLVLGDHEEQENAVNVRRFGHQQNEHVPFQTFKDKLVKQVENRGM.

A TGS domain is found at 1 to 64; sequence MSKHVHIQLP…EEDAELSIVT (64 aa). The catalytic stretch occupies residues 245 to 535; it reads DHRKLGKQLG…LIEHYGGAFP (291 aa). 3 residues coordinate Zn(2+): C336, H387, and H512.

The protein belongs to the class-II aminoacyl-tRNA synthetase family. As to quaternary structure, homodimer. Zn(2+) serves as cofactor.

It localises to the cytoplasm. The enzyme catalyses tRNA(Thr) + L-threonine + ATP = L-threonyl-tRNA(Thr) + AMP + diphosphate + H(+). Its function is as follows. Catalyzes the attachment of threonine to tRNA(Thr) in a two-step reaction: L-threonine is first activated by ATP to form Thr-AMP and then transferred to the acceptor end of tRNA(Thr). Also edits incorrectly charged L-seryl-tRNA(Thr). The polypeptide is Threonine--tRNA ligase 2 (thrZ) (Bacillus subtilis (strain 168)).